We begin with the raw amino-acid sequence, 368 residues long: Proline-rich protein 5-like (368 aa).

At Ser28 the chain carries Phosphoserine. A disordered region spans residues 312–368; sequence LGEESGGEDKCLLLQPSFPPPHRQCSSEPNITDGPDEPEQGATGSQEDSELNCASLS. Residues 353 to 368 show a composition bias toward polar residues; the sequence is ATGSQEDSELNCASLS.

This sequence belongs to the PROTOR family. Interacts with the mammalian target of rapamycin complex 2 (mTORC2) which contains MTOR, MLST8, PRR5, RICTOR, MAPKAP1 and DEPTOR. Interacts with RFFL. Interacts (via C-terminus) with ZFP36 (via C-terminus); this interaction may accelerate ZFP36-mediated mRNA decay during stress. Interacts with RICTOR. Post-translationally, ubiquitinated. Ubiquitination by RFFL promotes proteasomal degradation of PRR5L thereby modifying the substrate-specific activity of the mTORC2 complex. Ubiquitination by RFFL is stimulated by LPA/lysophosphatidic acid.

In terms of biological role, associates with the mTORC2 complex that regulates cellular processes including survival and organization of the cytoskeleton. Regulates the activity of the mTORC2 complex in a substrate-specific manner preventing for instance the specific phosphorylation of PKCs and thereby controlling cell migration. Plays a role in the stimulation of ZFP36-mediated mRNA decay of several ZFP36-associated mRNAs, such as TNF-alpha and GM-CSF, in response to stress. Required for ZFP36 localization to cytoplasmic stress granule (SG) and P-body (PB) in response to stress. This Bos taurus (Bovine) protein is Proline-rich protein 5-like (PRR5L).